The sequence spans 1671 residues: Kinesin-like protein unc-104 (1671 aa).

One can recognise a Kinesin motor domain in the interval 3-351 (SVKVAVRVRP…LRYADRAKQI (349 aa)). 97 to 104 (GQTGAGKS) is a binding site for ATP. The stretch at 358 to 437 (NEDANAKLIR…IAELNETWEE (80 aa)) forms a coiled coil. A disordered region spans residues 391-413 (DELNKSTTGIKSPSKSRNRNGST). A compositionally biased stretch (polar residues) spans 395-413 (KSTTGIKSPSKSRNRNGST). The region spanning 500–566 (TRLGTHEANV…LKTGSRVILG (67 aa)) is the FHA domain. A coiled-coil region spans residues 577–674 (EQARELREKI…EEQSMTMSMY (98 aa)). The segment at 949–973 (DVDSGRGIDSNSASDCPENAEEPGE) is disordered. Residues 1538–1636 (VVARKGLLNV…WLYAINPLLA (99 aa)) form the PH domain.

The protein belongs to the TRAFAC class myosin-kinesin ATPase superfamily. Kinesin family. Unc-104 subfamily. As to quaternary structure, monomer.

It localises to the cytoplasm. Its subcellular location is the cytoskeleton. Required for presynaptic maturation, has a role in axonal transport of dense-core vesicles carrying synaptic vesicle precursors, components required for the morphological transformation of axonal growth cones to mature boutons. The polypeptide is Kinesin-like protein unc-104 (Drosophila pseudoobscura pseudoobscura (Fruit fly)).